We begin with the raw amino-acid sequence, 543 residues long: CTP synthase (543 aa).

The tract at residues 1–265 (MTNYIFVTGG…DQLVVDRFGL (265 aa)) is amidoligase domain. Residue serine 13 coordinates CTP. Serine 13 is a binding site for UTP. ATP-binding positions include 14–19 (SLGKGI) and aspartate 71. Mg(2+) is bound by residues aspartate 71 and glutamate 139. CTP contacts are provided by residues 146–148 (DIE), 186–191 (KTKPTQ), and lysine 222. Residues 186–191 (KTKPTQ) and lysine 222 contribute to the UTP site. 238–240 (KDV) serves as a coordination point for ATP. Residues 290 to 541 (NIGMIGKYVE…VAAAGKYQKE (252 aa)) enclose the Glutamine amidotransferase type-1 domain. Residue glycine 351 participates in L-glutamine binding. Cysteine 378 functions as the Nucleophile; for glutamine hydrolysis in the catalytic mechanism. L-glutamine contacts are provided by residues 379–382 (LGMQ), glutamate 402, and arginine 469. Residues histidine 514 and glutamate 516 contribute to the active site.

The protein belongs to the CTP synthase family. As to quaternary structure, homotetramer.

It catalyses the reaction UTP + L-glutamine + ATP + H2O = CTP + L-glutamate + ADP + phosphate + 2 H(+). The catalysed reaction is L-glutamine + H2O = L-glutamate + NH4(+). It carries out the reaction UTP + NH4(+) + ATP = CTP + ADP + phosphate + 2 H(+). It functions in the pathway pyrimidine metabolism; CTP biosynthesis via de novo pathway; CTP from UDP: step 2/2. Allosterically activated by GTP, when glutamine is the substrate; GTP has no effect on the reaction when ammonia is the substrate. The allosteric effector GTP functions by stabilizing the protein conformation that binds the tetrahedral intermediate(s) formed during glutamine hydrolysis. Inhibited by the product CTP, via allosteric rather than competitive inhibition. Functionally, catalyzes the ATP-dependent amination of UTP to CTP with either L-glutamine or ammonia as the source of nitrogen. Regulates intracellular CTP levels through interactions with the four ribonucleotide triphosphates. The polypeptide is CTP synthase (Alteromonas mediterranea (strain DSM 17117 / CIP 110805 / LMG 28347 / Deep ecotype)).